The primary structure comprises 216 residues: Nicotinamidase (216 aa).

D8 is an active-site residue. 3 residues coordinate Zn(2+): D51, H53, and H94. The active site involves K122. C167 serves as the catalytic Nucleophile.

This sequence belongs to the isochorismatase family.

The protein resides in the cytoplasm. It localises to the nucleus. The protein localises to the peroxisome. It catalyses the reaction nicotinamide + H2O = nicotinate + NH4(+). It participates in cofactor biosynthesis; nicotinate biosynthesis; nicotinate from nicotinamide: step 1/1. Its activity is regulated as follows. Inhibited by N-ethylmaleimide, HgCl(2) and PCMB. Competitively inhibited by NAD, NMN and 3-acetylpyridine. Catalyzes the deamidation of nicotinamide, an early step in the NAD(+) salvage pathway. Positively regulates SIR2-mediated silencing and longevity by preventing the accumulation of intracellular nicotinamide, an inhibitor of SIR2, during times of stress. Also acts on nicotinyl hydroxamate. This is Nicotinamidase (PNC1) from Saccharomyces cerevisiae (strain ATCC 204508 / S288c) (Baker's yeast).